Consider the following 927-residue polypeptide: Isoleucine--tRNA ligase (927 aa).

The short motif at 57–67 (PFANGNIHMGH) is the 'HIGH' region element. L-isoleucyl-5'-AMP is bound at residue E553. The short motif at 594 to 598 (KMSKS) is the 'KMSKS' region element. K597 provides a ligand contact to ATP. 4 residues coordinate Zn(2+): C886, C889, C906, and C909.

The protein belongs to the class-I aminoacyl-tRNA synthetase family. IleS type 1 subfamily. In terms of assembly, monomer. Zn(2+) serves as cofactor.

Its subcellular location is the cytoplasm. The enzyme catalyses tRNA(Ile) + L-isoleucine + ATP = L-isoleucyl-tRNA(Ile) + AMP + diphosphate. In terms of biological role, catalyzes the attachment of isoleucine to tRNA(Ile). As IleRS can inadvertently accommodate and process structurally similar amino acids such as valine, to avoid such errors it has two additional distinct tRNA(Ile)-dependent editing activities. One activity is designated as 'pretransfer' editing and involves the hydrolysis of activated Val-AMP. The other activity is designated 'posttransfer' editing and involves deacylation of mischarged Val-tRNA(Ile). In Lactobacillus acidophilus (strain ATCC 700396 / NCK56 / N2 / NCFM), this protein is Isoleucine--tRNA ligase.